The primary structure comprises 376 residues: GTPase Obg (376 aa).

The Obg domain maps to 2–161 (ASFVDEVLIR…RVVHVELRIV (160 aa)). The region spanning 162–328 (ADVGFVGLPN…LQEAFVRLSD (167 aa)) is the OBG-type G domain. GTP-binding positions include 168–175 (GLPNAGKS), 193–197 (FTTRI), 215–218 (DVPG), 282–285 (TKLD), and 309–311 (SVH). Residues S175 and T195 each coordinate Mg(2+).

Belongs to the TRAFAC class OBG-HflX-like GTPase superfamily. OBG GTPase family. Monomer. Requires Mg(2+) as cofactor.

The protein localises to the cytoplasm. In terms of biological role, an essential GTPase which binds GTP, GDP and possibly (p)ppGpp with moderate affinity, with high nucleotide exchange rates and a fairly low GTP hydrolysis rate. Plays a role in control of the cell cycle, stress response, ribosome biogenesis and in those bacteria that undergo differentiation, in morphogenesis control. The chain is GTPase Obg from Treponema pallidum (strain Nichols).